Consider the following 159-residue polypeptide: Regulator of G-protein signaling 13 (159 aa).

The 117-residue stretch at 34 to 150 folds into the RGS domain; it reads SFENLMATKY…LKSEMYQKLL (117 aa).

Functionally, inhibits signal transduction by increasing the GTPase activity of G protein alpha subunits thereby driving them into their inactive GDP-bound form. Binds to both G(i)-alpha and G(q)-alpha. The chain is Regulator of G-protein signaling 13 (RGS13) from Homo sapiens (Human).